Here is a 94-residue protein sequence, read N- to C-terminus: Small ribosomal subunit protein uS19 (94 aa).

It belongs to the universal ribosomal protein uS19 family.

Its function is as follows. Protein S19 forms a complex with S13 that binds strongly to the 16S ribosomal RNA. This is Small ribosomal subunit protein uS19 from Halothermothrix orenii (strain H 168 / OCM 544 / DSM 9562).